We begin with the raw amino-acid sequence, 151 residues long: 3-hydroxyacyl-[acyl-carrier-protein] dehydratase FabZ (151 aa).

Histidine 53 is an active-site residue.

It belongs to the thioester dehydratase family. FabZ subfamily.

It is found in the cytoplasm. It catalyses the reaction a (3R)-hydroxyacyl-[ACP] = a (2E)-enoyl-[ACP] + H2O. In terms of biological role, involved in unsaturated fatty acids biosynthesis. Catalyzes the dehydration of short chain beta-hydroxyacyl-ACPs and long chain saturated and unsaturated beta-hydroxyacyl-ACPs. The protein is 3-hydroxyacyl-[acyl-carrier-protein] dehydratase FabZ of Erythrobacter litoralis (strain HTCC2594).